Here is a 201-residue protein sequence, read N- to C-terminus: Superoxide dismutase [Mn] (201 aa).

Residues H27, H81, D163, and H167 each contribute to the Mn(2+) site.

This sequence belongs to the iron/manganese superoxide dismutase family. Homodimer. Mn(2+) is required as a cofactor.

It carries out the reaction 2 superoxide + 2 H(+) = H2O2 + O2. In terms of biological role, destroys superoxide anion radicals which are normally produced within the cells and which are toxic to biological systems. May play a critical role against oxidative stress, affecting both the survival and the virulence of S.pneumoniae. The sequence is that of Superoxide dismutase [Mn] (sodA) from Streptococcus pneumoniae serotype 4 (strain ATCC BAA-334 / TIGR4).